A 108-amino-acid chain; its full sequence is ATP-dependent Clp protease adapter protein ClpS (108 aa).

This sequence belongs to the ClpS family. In terms of assembly, binds to the N-terminal domain of the chaperone ClpA.

Involved in the modulation of the specificity of the ClpAP-mediated ATP-dependent protein degradation. In Ralstonia nicotianae (strain ATCC BAA-1114 / GMI1000) (Ralstonia solanacearum), this protein is ATP-dependent Clp protease adapter protein ClpS.